The sequence spans 683 residues: U4/U6 small nuclear ribonucleoprotein Prp3 (683 aa).

In terms of domain architecture, PWI spans 1 to 87 (MALSKRELDE…HSKSSSDRSR (87 aa)). Residues 73-107 (GRSSRHSKSSSDRSRKRELKEVFGDDSEISKESSG) show a composition bias toward basic and acidic residues. Positions 73–135 (GRSSRHSKSS…IPGPPSESPG (63 aa)) are disordered. Residue K139 forms a Glycyl lysine isopeptide (Lys-Gly) (interchain with G-Cter in SUMO2) linkage. A disordered region spans residues 153 to 183 (IEERKKQLSFISPPTPQPKTPSSSQPERLPI). S164 is modified (phosphoserine). T167 carries the phosphothreonine modification. Residues K244 and K252 each participate in a glycyl lysine isopeptide (Lys-Gly) (interchain with G-Cter in SUMO2) cross-link. Residues 416-550 (NLVEHPAQLN…VHISVYRVRN (135 aa)) are mediates interaction with SART3. Residue S619 is modified to Phosphoserine.

Component of the precatalytic spliceosome (spliceosome B complex). Component of the U4/U6-U5 tri-snRNP complex, a building block of the precatalytic spliceosome (spliceosome B complex). The U4/U6-U5 tri-snRNP complex is composed of the U4, U6 and U5 snRNAs and at least PRPF3, PRPF4, PRPF6, PRPF8, PRPF31, SNRNP200, TXNL4A, SNRNP40, SNRPB, SNRPD1, SNRPD2, SNRPD3, SNRPE, SNRPF, SNRPG, DDX23, CD2BP2, PPIH, SNU13, EFTUD2, SART1 and USP39, plus LSM2, LSM3, LSM4, LSM5, LSM6, LSM7 and LSM8. Interacts directly with PRPF4. Part of a heteromeric complex containing PPIH, PRPF3 and PRPF4 that is stable in the absence of RNA. Interacts with SART3; the interaction is direct and recruits the deubiquitinase USP4 to PRPF3. Interacts with PRPF19. Interacts ('Lys-63'-linked polyubiquitinated) with PRPF8 (via the MPN (JAB/Mov34) domain); may stabilize the U4/U6-U5 tri-snRNP complex. Interacts with ERCC6. In terms of processing, ubiquitinated. Undergoes 'Lys-63'-linked polyubiquitination by PRPF19 and deubiquitination by USP4. 'Lys-63'-linked ubiquitination increases the affinity for PRPF8 and may regulate the assembly of the U4/U6-U5 tri-snRNP complex. In terms of tissue distribution, highly expressed in retina, liver, kidney and blood. Detected at lower levels in heart and brain.

It is found in the nucleus. Its subcellular location is the nucleus speckle. Its function is as follows. Plays a role in pre-mRNA splicing as component of the U4/U6-U5 tri-snRNP complex that is involved in spliceosome assembly, and as component of the precatalytic spliceosome (spliceosome B complex). The protein is U4/U6 small nuclear ribonucleoprotein Prp3 (PRPF3) of Homo sapiens (Human).